We begin with the raw amino-acid sequence, 273 residues long: Large ribosomal subunit protein uL2 (273 aa).

Disordered regions lie at residues 28 to 54 (KPYAPLLEKNSKSGGRNNNGRITTRHI) and 221 to 273 (RGTA…RRTK). Residues 39–48 (KSGGRNNNGR) are compositionally biased toward low complexity.

This sequence belongs to the universal ribosomal protein uL2 family. As to quaternary structure, part of the 50S ribosomal subunit. Forms a bridge to the 30S subunit in the 70S ribosome.

One of the primary rRNA binding proteins. Required for association of the 30S and 50S subunits to form the 70S ribosome, for tRNA binding and peptide bond formation. It has been suggested to have peptidyltransferase activity; this is somewhat controversial. Makes several contacts with the 16S rRNA in the 70S ribosome. The protein is Large ribosomal subunit protein uL2 of Pectobacterium carotovorum subsp. carotovorum (strain PC1).